A 332-amino-acid chain; its full sequence is Malate dehydrogenase, cytoplasmic (332 aa).

Residues glutamine 16–isoleucine 17, aspartate 43, and glycine 90 each bind NAD(+). Arginine 99 lines the oxaloacetate pocket. NAD(+) contacts are provided by glutamine 113 and asparagine 132. Oxaloacetate contacts are provided by asparagine 132, arginine 163, histidine 188, and serine 243. Histidine 188 functions as the Proton acceptor in the catalytic mechanism.

The protein belongs to the LDH/MDH superfamily. MDH type 2 family. Homodimer.

The protein resides in the cytoplasm. It carries out the reaction (S)-malate + NAD(+) = oxaloacetate + NADH + H(+). This Beta vulgaris (Sugar beet) protein is Malate dehydrogenase, cytoplasmic (NR1).